The following is a 199-amino-acid chain: MKFSPLVDELIQSLKCLPGVGPKSAQRMAFQLLERDRKAGSKLADSLGKAMSEVGHCQSCRTFTEETYCPICVSTKRGHSSVICVVETPADVLAIEAGGHFSGRYFVLLGHLSPLDGVGPDELGLALLETHLASGEVTELILATNPTVEGDATAHYIADMAKNHELAVSRIAHGVPVGGELEYVDSTTLALSFNGRLPI.

The segment at 57 to 72 adopts a C4-type zinc-finger fold; that stretch reads CQSCRTFTEETYCPIC. In terms of domain architecture, Toprim spans 81–176; it reads SVICVVETPA…AVSRIAHGVP (96 aa).

This sequence belongs to the RecR family.

Functionally, may play a role in DNA repair. It seems to be involved in an RecBC-independent recombinational process of DNA repair. It may act with RecF and RecO. This Shewanella piezotolerans (strain WP3 / JCM 13877) protein is Recombination protein RecR.